We begin with the raw amino-acid sequence, 1192 residues long: DNA topoisomerase 2 (1192 aa).

Residues asparagine 64, asparagine 95, and 142–149 each bind ATP; that span reads GTNGVGLK. Glutamate 438, aspartate 539, and aspartate 541 together coordinate Mg(2+). The Topo IIA-type catalytic domain occupies 707–1174; it reads IPNFLDGMTR…PGASVWLEEI (468 aa). Tyrosine 800 (O-(5'-phospho-DNA)-tyrosine intermediate) is an active-site residue.

The protein belongs to the type II topoisomerase family. Requires Mg(2+) as cofactor. The cofactor is Mn(2+). It depends on Ca(2+) as a cofactor.

The protein resides in the host cytoplasm. It catalyses the reaction ATP-dependent breakage, passage and rejoining of double-stranded DNA.. Type II topoisomerase. Processively relaxes supercoiled DNA. Displays DNA-supercoiling activity only when associated with the viral histone-like protein. The chain is DNA topoisomerase 2 from Ornithodoros (relapsing fever ticks).